Consider the following 534-residue polypeptide: Cysteine/serine-rich nuclear protein 2 (534 aa).

Residue Met-1 is modified to N-acetylmethionine. 2 disordered regions span residues 1–52 (MDAF…FTPT) and 480–534 (DCGL…PLAV). Low complexity predominate over residues 31-40 (SSDSADSCDS). Over residues 42–52 (NPPTTASFTPT) the composition is skewed to polar residues. The segment covering 480-492 (DCGLKEPESEDLH) has biased composition (basic and acidic residues).

It belongs to the AXUD1 family. Highest expression detected in thymus, brain and ovary. Low levels detected in naive T-cells.

It localises to the nucleus. In terms of biological role, binds to the consensus sequence 5'-AGAGTG-3' and has transcriptional activator activity. May play a role in apoptosis. The protein is Cysteine/serine-rich nuclear protein 2 (Csrnp2) of Mus musculus (Mouse).